Reading from the N-terminus, the 430-residue chain is MSRNQQLFDRAQQTIPGGVNSPVRAFRSVGGTPRFITRAEGAYMWDADGQRYIDYIGSWGPMIVGHAHPEVVRAVQETAAHSFSFGAPTEAEITMAEEICKLVPSIEQVRLVSSGTEATMSALRLARGFTGRDLIIKFEGCYHGHADSLLVKAGSGLLTFADTTQNAPSSAGVPADVTRHTMVLEYNNVEQLEQAFARHAGEIAAVIVEPVAGNMNLVRASDAFLKAMRELCTRDGAVLILDEVMTGFRVALGGAQAHYGIRPDLTCLGKVIGGGMPAAAFGGRRDIMARLAPLGGVYQAGTLSGNPLAVAAGLATLKLIQAPGFYDRLASQTRKLADGLAEAAKAAGVPFAADAIGGMFGIYFREGVPGSFAEVTRSDTARFNRFFHAMLDHGVYLAPSAFEAGFVSAQHDDAILAATLEAARKAFAAG.

K270 is modified (N6-(pyridoxal phosphate)lysine).

Belongs to the class-III pyridoxal-phosphate-dependent aminotransferase family. HemL subfamily. Homodimer. Requires pyridoxal 5'-phosphate as cofactor.

The protein localises to the cytoplasm. The catalysed reaction is (S)-4-amino-5-oxopentanoate = 5-aminolevulinate. The protein operates within porphyrin-containing compound metabolism; protoporphyrin-IX biosynthesis; 5-aminolevulinate from L-glutamyl-tRNA(Glu): step 2/2. The chain is Glutamate-1-semialdehyde 2,1-aminomutase from Cupriavidus necator (strain ATCC 17699 / DSM 428 / KCTC 22496 / NCIMB 10442 / H16 / Stanier 337) (Ralstonia eutropha).